The chain runs to 213 residues: 3-demethoxyubiquinol 3-hydroxylase (213 aa).

E62, E92, H95, E144, E176, and H179 together coordinate Fe cation.

The protein belongs to the COQ7 family. Requires Fe cation as cofactor.

It localises to the cell membrane. The enzyme catalyses a 5-methoxy-2-methyl-3-(all-trans-polyprenyl)benzene-1,4-diol + AH2 + O2 = a 3-demethylubiquinol + A + H2O. It participates in cofactor biosynthesis; ubiquinone biosynthesis. Functionally, catalyzes the hydroxylation of 2-nonaprenyl-3-methyl-6-methoxy-1,4-benzoquinol during ubiquinone biosynthesis. The polypeptide is 3-demethoxyubiquinol 3-hydroxylase (Chromohalobacter salexigens (strain ATCC BAA-138 / DSM 3043 / CIP 106854 / NCIMB 13768 / 1H11)).